The sequence spans 236 residues: Ribosome-inactivating protein saporin-3 (236 aa).

The active site involves E148.

The protein belongs to the ribosome-inactivating protein family. Type 1 RIP subfamily.

The catalysed reaction is Endohydrolysis of the N-glycosidic bond at one specific adenosine on the 28S rRNA.. Functionally, ribosome-inactivating protein of type 1, inhibits protein synthesis in animal cells. Useful as immunotoxin for pharmacological applications. The protein is Ribosome-inactivating protein saporin-3 (SAP3) of Saponaria officinalis (Common soapwort).